Here is a 268-residue protein sequence, read N- to C-terminus: Ubiquinone biosynthesis protein COQ4 homolog, mitochondrial (268 aa).

4 residues coordinate Zn(2+): His171, Asp172, His175, and Glu187.

Belongs to the COQ4 family. Component of a multi-subunit COQ enzyme complex. Zn(2+) serves as cofactor.

It localises to the mitochondrion inner membrane. It carries out the reaction a 4-hydroxy-3-methoxy-5-(all-trans-polyprenyl)benzoate + H(+) = a 2-methoxy-6-(all-trans-polyprenyl)phenol + CO2. Its pathway is cofactor biosynthesis; ubiquinone biosynthesis. Functionally, lyase that catalyzes the C1-decarboxylation of 4-hydroxy-3-methoxy-5-(all-trans-polyprenyl)benzoic acid into 2-methoxy-6-(all-trans-polyprenyl)phenol during ubiquinone biosynthesis. This Drosophila erecta (Fruit fly) protein is Ubiquinone biosynthesis protein COQ4 homolog, mitochondrial.